The sequence spans 95 residues: Co-chaperonin GroES (95 aa).

Belongs to the GroES chaperonin family. In terms of assembly, heptamer of 7 subunits arranged in a ring. Interacts with the chaperonin GroEL.

It is found in the cytoplasm. Functionally, together with the chaperonin GroEL, plays an essential role in assisting protein folding. The GroEL-GroES system forms a nano-cage that allows encapsulation of the non-native substrate proteins and provides a physical environment optimized to promote and accelerate protein folding. GroES binds to the apical surface of the GroEL ring, thereby capping the opening of the GroEL channel. This is Co-chaperonin GroES from Neisseria meningitidis serogroup C (strain 053442).